Consider the following 175-residue polypeptide: Ferritin light chain (175 aa).

N-acetylserine is present on Ser2. Positions 7 to 156 (QNYSTEVEAA…DHLTNLRRLA (150 aa)) constitute a Ferritin-like diiron domain. Glu54, Glu58, Glu61, and Glu64 together coordinate Fe cation.

Belongs to the ferritin family. As to quaternary structure, oligomer of 24 subunits. There are two types of subunits: L (light) chain and H (heavy) chain. The major chain can be light or heavy, depending on the species and tissue type. The functional molecule forms a roughly spherical shell with a diameter of 12 nm and contains a central cavity into which the insoluble mineral iron core is deposited. Interacts with NCOA4.

The protein localises to the cytoplasmic vesicle. It localises to the autophagosome. The protein resides in the cytoplasm. It is found in the autolysosome. Functionally, stores iron in a soluble, non-toxic, readily available form. Important for iron homeostasis. Iron is taken up in the ferrous form and deposited as ferric hydroxides after oxidation. Also plays a role in delivery of iron to cells. Mediates iron uptake in capsule cells of the developing kidney. Delivery to lysosomes by the cargo receptor NCOA4 for autophagic degradation and release or iron. The polypeptide is Ferritin light chain (FTL) (Bos taurus (Bovine)).